A 163-amino-acid polypeptide reads, in one-letter code: Type-1 angiotensin II receptor-associated protein-like (163 aa).

Residues 1-28 (MELPAVNLKAIVFTHWLLTVFACMIDWL) lie on the Extracellular side of the membrane. A helical membrane pass occupies residues 29-49 (PKAYGLANITILAMGVWAIAQ). Residues 50–55 (RDSIDA) are Cytoplasmic-facing. A helical membrane pass occupies residues 56–76 (IFMFLIGLLLTILTDILLFAL). Residues 77–95 (YFTEAEKASESGPLRDLFR) are Extracellular-facing. Residues 96-116 (FSSGMGIFSLLLKPLSCFFMY) traverse the membrane as a helical segment. Residues 117–163 (HMYRERGGEYFVNLGFITLSRDRSSYQSIEHMDPPADQDNKLPSRTY) lie on the Cytoplasmic side of the membrane.

The protein resides in the membrane. Functionally, appears to be a negative regulator of angiotensin II type I receptor-mediated signaling. In Xenopus tropicalis (Western clawed frog), this protein is Type-1 angiotensin II receptor-associated protein-like (agtrap).